We begin with the raw amino-acid sequence, 92 residues long: RNA-binding protein Hfq (92 aa).

A Sm domain is found at 9-68; that stretch reads DPFLNALRRERVPVSVYLVNGIKLQGTIESFDQFVVLLRNTVSQMVYKHAISTVVPARNV.

The protein belongs to the Hfq family. As to quaternary structure, homohexamer.

RNA chaperone that binds small regulatory RNA (sRNAs) and mRNAs to facilitate mRNA translational regulation in response to envelope stress, environmental stress and changes in metabolite concentrations. Also binds with high specificity to tRNAs. This chain is RNA-binding protein Hfq, found in Xylella fastidiosa (strain M12).